The sequence spans 1202 residues: Adenine-specific methyltransferase PglX (1202 aa).

This sequence belongs to the methyltransferase superfamily. PglX adenine methyltransferase family.

The enzyme catalyses a 2'-deoxyadenosine in DNA + S-adenosyl-L-methionine = an N(6)-methyl-2'-deoxyadenosine in DNA + S-adenosyl-L-homocysteine + H(+). In terms of biological role, BREX systems (bacteriophage exclusion) provide immunity against bacteriophage. Part of a type 1 BREX system which protects against dsDNA phage. This system allows phage adsorption but prevents phage DNA replication, without degradation of the phage DNA. Methylation of bacterial DNA by this protein guides self/non-self discrimination. Probably methylates the adenine in the fifth position of the hexamer 5'-ACRCAG-3' in genomic DNA. N(6)-methylated adenine on the fifth position of 5'-ACRCAG-3' is found in the genome; there are 1906 sites in the genomic DNA. The chain is Adenine-specific methyltransferase PglX from Lacticaseibacillus casei (strain Zhang) (Lactobacillus casei).